The sequence spans 70 residues: Phycobilisome 8.1 kDa linker polypeptide, phycocyanin-associated, rod (70 aa).

The 59-residue stretch at 5 to 63 folds into the CpcD-like domain; sequence SRSFQVEVSGLHQNEVTNQNNYPIRSSGSVFITIPFSRFNEELQRINRLGGKIVNIQPL.

It belongs to the phycobilisome linker protein family.

The protein localises to the cellular thylakoid membrane. Its function is as follows. Rod linker protein, associated with phycocyanin. Linker polypeptides determine the state of aggregation and the location of the disk-shaped phycobiliprotein units within the phycobilisome and modulate their spectroscopic properties in order to mediate a directed and optimal energy transfer. The sequence is that of Phycobilisome 8.1 kDa linker polypeptide, phycocyanin-associated, rod (cpcD3) from Microchaete diplosiphon (Fremyella diplosiphon).